Reading from the N-terminus, the 782-residue chain is E3 UFM1-protein ligase 1 homolog (782 aa).

The tract at residues 405–478 (VSTQELEDDG…TRGGGGASKK (74 aa)) is disordered.

The protein belongs to the UFL1 family.

In terms of biological role, E3 UFM1-protein ligase that mediates ufmylation of target proteins. The chain is E3 UFM1-protein ligase 1 homolog from Drosophila simulans (Fruit fly).